Reading from the N-terminus, the 229-residue chain is Large ribosomal subunit protein uL1 (229 aa).

It belongs to the universal ribosomal protein uL1 family. Part of the 50S ribosomal subunit.

Functionally, binds directly to 23S rRNA. The L1 stalk is quite mobile in the ribosome, and is involved in E site tRNA release. Its function is as follows. Protein L1 is also a translational repressor protein, it controls the translation of the L11 operon by binding to its mRNA. This Caulobacter vibrioides (strain ATCC 19089 / CIP 103742 / CB 15) (Caulobacter crescentus) protein is Large ribosomal subunit protein uL1.